Consider the following 492-residue polypeptide: Ribose import ATP-binding protein RbsA (492 aa).

2 ABC transporter domains span residues 3 to 239 (IDMR…VGRK) and 238 to 492 (RKLE…TGGK). 35–42 (GENGAGKS) lines the ATP pocket.

It belongs to the ABC transporter superfamily. Ribose importer (TC 3.A.1.2.1) family. In terms of assembly, the complex is composed of an ATP-binding protein (RbsA), two transmembrane proteins (RbsC) and a solute-binding protein (RbsB).

Its subcellular location is the cell membrane. The enzyme catalyses D-ribose(out) + ATP + H2O = D-ribose(in) + ADP + phosphate + H(+). Part of the ABC transporter complex RbsABC involved in ribose import. Responsible for energy coupling to the transport system. The sequence is that of Ribose import ATP-binding protein RbsA from Streptococcus agalactiae serotype III (strain NEM316).